The primary structure comprises 468 residues: ERO1-like protein alpha (468 aa).

A signal peptide spans 1–23; sequence MGHRWGFLIVFLGAVGLLGSGYG. 8 cysteine pairs are disulfide-bonded: C35-C48, C37-C46, C85-C391, C94-C99, C94-C131, C99-C104, C208-C241, and C394-C397. S106, S143, and S145 each carry phosphoserine. FAD contacts are provided by R187, T189, and W200. Positions 252 and 255 each coordinate FAD. N280 carries an N-linked (GlcNAc...) asparagine glycan. R287 and R300 together coordinate FAD. An N-linked (GlcNAc...) asparagine glycan is attached at N384.

The protein belongs to the EROs family. In terms of assembly, predominantly monomer. May function both as a monomer and a homodimer. Interacts with PDILT. Interacts with ERP44; the interaction results in retention of ERO1A in the endoplasmic reticulum. FAD is required as a cofactor. The Cys-94/Cys-99 and Cys-394/Cys-397 disulfide bonds constitute the redox-active center. The Cys-94/Cys-99 disulfide bond may accept electron from P4HB and funnel them to the active site disulfide Cys-394/Cys-397. The regulatory Cys-99/Cys-104 disulfide bond stabilizes the other regulatory bond Cys-94/Cys-131. Post-translationally, phosphorylated on Ser-145 by FAM20C in the Golgi which increases its enzymatic activity. Phosphorylation is induced by lactation. It is also induced by hypoxia and reductive stress.

The protein resides in the endoplasmic reticulum membrane. Its subcellular location is the golgi apparatus lumen. It is found in the secreted. The protein localises to the cell projection. It localises to the dendrite. Enzyme activity is tightly regulated to prevent the accumulation of reactive oxygen species in the endoplasmic reticulum. Reversibly down-regulated by the formation of disulfide bonds between the active site Cys-94 and Cys-131, and between Cys-99 and Cys-104. Glutathione may be required to regulate its activity in the endoplasmic reticulum. Functionally, oxidoreductase involved in disulfide bond formation in the endoplasmic reticulum. Efficiently reoxidizes P4HB/PDI, the enzyme catalyzing protein disulfide formation, in order to allow P4HB to sustain additional rounds of disulfide formation. Following P4HB reoxidation, passes its electrons to molecular oxygen via FAD, leading to the production of reactive oxygen species (ROS) in the cell. Required for the proper folding of immunoglobulins. Plays an important role in ER stress-induced, CHOP-dependent apoptosis by activating the inositol 1,4,5-trisphosphate receptor IP3R1. The protein is ERO1-like protein alpha of Sus scrofa (Pig).